The following is a 67-amino-acid chain: Alpha-toxin Bu1 (67 aa).

The LCN-type CS-alpha/beta domain maps to 3–65; sequence RDAYIADDKN…VPIRIPGRCR (63 aa). 4 disulfide bridges follow: C13–C64, C17–C37, C23–C47, and C27–C49. R65 carries the post-translational modification Arginine amide.

The protein belongs to the long (4 C-C) scorpion toxin superfamily. Sodium channel inhibitor family. Alpha subfamily. In terms of tissue distribution, expressed by the venom gland.

The protein resides in the secreted. Functionally, alpha toxins bind voltage-independently at site-3 of sodium channels (Nav) and inhibit the inactivation of the activated channels, thereby blocking neuronal transmission. Since the experiments have been done on F11 cells (immortalized cell line derived from rat DRG neurons mainly expressing Nav1.3/SCN3A, but also Nav1.7/SCN9A and Nav1.2/SCN2A), it is supposed to act on these channels. The slow of inactivation process is partially reversible. Is lethal to mice. In Buthacus macrocentrus (Turkish scorpion), this protein is Alpha-toxin Bu1.